A 161-amino-acid polypeptide reads, in one-letter code: Cytochrome c-type biogenesis protein CcmE (161 aa).

At Met-1–Arg-8 the chain is on the cytoplasmic side. The chain crosses the membrane as a helical; Signal-anchor for type II membrane protein span at residues Leu-9 to Ala-29. Residues Leu-30–Glu-161 are Periplasmic-facing. Heme is bound by residues His-129 and Tyr-133. A disordered region spans residues Met-142–Glu-161. Residues Gln-150–Glu-161 show a composition bias toward polar residues.

This sequence belongs to the CcmE/CycJ family.

The protein resides in the cell inner membrane. Its function is as follows. Heme chaperone required for the biogenesis of c-type cytochromes. Transiently binds heme delivered by CcmC and transfers the heme to apo-cytochromes in a process facilitated by CcmF and CcmH. This chain is Cytochrome c-type biogenesis protein CcmE, found in Vibrio parahaemolyticus serotype O3:K6 (strain RIMD 2210633).